The primary structure comprises 127 residues: Large ribosomal subunit protein bL20 (127 aa).

Belongs to the bacterial ribosomal protein bL20 family.

Functionally, binds directly to 23S ribosomal RNA and is necessary for the in vitro assembly process of the 50S ribosomal subunit. It is not involved in the protein synthesizing functions of that subunit. The polypeptide is Large ribosomal subunit protein bL20 (Corynebacterium diphtheriae (strain ATCC 700971 / NCTC 13129 / Biotype gravis)).